Reading from the N-terminus, the 275-residue chain is Large ribosomal subunit protein uL2 (275 aa).

Residues Val-224 to Gly-251 are disordered.

Belongs to the universal ribosomal protein uL2 family. Part of the 50S ribosomal subunit. Forms a bridge to the 30S subunit in the 70S ribosome.

Its function is as follows. One of the primary rRNA binding proteins. Required for association of the 30S and 50S subunits to form the 70S ribosome, for tRNA binding and peptide bond formation. It has been suggested to have peptidyltransferase activity; this is somewhat controversial. Makes several contacts with the 16S rRNA in the 70S ribosome. This Heliobacterium modesticaldum (strain ATCC 51547 / Ice1) protein is Large ribosomal subunit protein uL2.